The chain runs to 559 residues: S-layer protein (559 aa).

The signal sequence occupies residues 1–28; it reads MAMSLKKIGAIAVGGAMVASALASGVMA. N-linked (GlcNAc...) asparagine glycosylation is found at asparagine 108, asparagine 130, asparagine 155, asparagine 222, and asparagine 373.

This sequence belongs to the Mj S-layer protein family.

The protein localises to the secreted. Its subcellular location is the cell wall. It localises to the S-layer. S-layer protein. The S-layer is a paracrystalline mono-layered assembly of proteins which coat the surface of the cell. The chain is S-layer protein from Methanothermococcus thermolithotrophicus (Methanococcus thermolithotrophicus).